We begin with the raw amino-acid sequence, 807 residues long: Sucrose synthase 2 (807 aa).

A GT-B glycosyltransferase region spans residues 274–752 (MVFNVVILSP…GLKRIYERYT (479 aa)).

This sequence belongs to the glycosyltransferase 1 family. Plant sucrose synthase subfamily. Detected in the whole plant but at lower levels. Predominantly expressed in developing siliques. Also detected in the root tip. Detected in the embryo, endosperm and seed coat (at the protein level).

It localises to the cytoplasm. It is found in the plastid membrane. It catalyses the reaction an NDP-alpha-D-glucose + D-fructose = a ribonucleoside 5'-diphosphate + sucrose + H(+). Its function is as follows. Sucrose-cleaving enzyme that provides UDP-glucose and fructose for various metabolic pathways. Modulates metabolic homeostasis and directs carbon towards starch synthesis in developing seeds. This chain is Sucrose synthase 2 (SUS2), found in Arabidopsis thaliana (Mouse-ear cress).